We begin with the raw amino-acid sequence, 143 residues long: Large ribosomal subunit protein uL13 (143 aa).

It belongs to the universal ribosomal protein uL13 family. As to quaternary structure, part of the 50S ribosomal subunit.

Functionally, this protein is one of the early assembly proteins of the 50S ribosomal subunit, although it is not seen to bind rRNA by itself. It is important during the early stages of 50S assembly. This is Large ribosomal subunit protein uL13 from Dehalococcoides mccartyi (strain ATCC BAA-2100 / JCM 16839 / KCTC 5957 / BAV1).